We begin with the raw amino-acid sequence, 381 residues long: Cytochrome b (381 aa).

Helical transmembrane passes span 38 to 58 (FGSL…FLAM), 82 to 103 (WLLR…YFHI), 118 to 138 (WMTG…GYVL), and 183 to 203 (FFTF…IHLL). H88 and H102 together coordinate heme b. Positions 187 and 201 each coordinate heme b. H206 serves as a coordination point for a ubiquinone. 4 helical membrane-spanning segments follow: residues 231 to 251 (IKDT…SLTS), 293 to 313 (LGGV…PFTF), 325 to 345 (VAQP…WIGA), and 352 to 372 (YNFL…FTPI).

This sequence belongs to the cytochrome b family. In terms of assembly, the main subunits of complex b-c1 are: cytochrome b, cytochrome c1 and the Rieske protein. The cofactor is heme b.

The protein resides in the mitochondrion inner membrane. Functionally, component of the ubiquinol-cytochrome c reductase complex (complex III or cytochrome b-c1 complex) that is part of the mitochondrial respiratory chain. The b-c1 complex mediates electron transfer from ubiquinol to cytochrome c. Contributes to the generation of a proton gradient across the mitochondrial membrane that is then used for ATP synthesis. The sequence is that of Cytochrome b (MT-CYB) from Artemia franciscana (Brine shrimp).